Consider the following 521-residue polypeptide: Exodeoxyribonuclease 7 large subunit (521 aa).

The disordered stretch occupies residues 494-521 (ATSGAARPKPAAKPSTKAKEPGNQGSLF). Positions 498 to 508 (AARPKPAAKPS) are enriched in low complexity.

Belongs to the XseA family. As to quaternary structure, heterooligomer composed of large and small subunits.

It localises to the cytoplasm. The enzyme catalyses Exonucleolytic cleavage in either 5'- to 3'- or 3'- to 5'-direction to yield nucleoside 5'-phosphates.. Bidirectionally degrades single-stranded DNA into large acid-insoluble oligonucleotides, which are then degraded further into small acid-soluble oligonucleotides. This Mesorhizobium japonicum (strain LMG 29417 / CECT 9101 / MAFF 303099) (Mesorhizobium loti (strain MAFF 303099)) protein is Exodeoxyribonuclease 7 large subunit.